Reading from the N-terminus, the 260-residue chain is NAD-capped RNA hydrolase NudC (260 aa).

Arg69 provides a ligand contact to substrate. Cys98 and Cys101 together coordinate Zn(2+). Glu111 contributes to the substrate binding site. Residues Cys116 and Cys119 each contribute to the Zn(2+) site. Tyr124 serves as a coordination point for substrate. The region spanning 125–248 is the Nudix hydrolase domain; it reads PQIAPCIIVA…TVARRLIEDT (124 aa). The a divalent metal cation site is built by Ala158, Glu174, and Glu178. The Nudix box signature appears at 159 to 180; that stretch reads GFVEVGETLEQTVVREVMEESQ. Residue 192–199 coordinates substrate; sequence QPWPFPHS. Glu219 serves as a coordination point for a divalent metal cation. Position 241 (Ala241) interacts with substrate.

It belongs to the Nudix hydrolase family. NudC subfamily. In terms of assembly, homodimer. Requires Mg(2+) as cofactor. Mn(2+) is required as a cofactor. Zn(2+) serves as cofactor.

The catalysed reaction is a 5'-end NAD(+)-phospho-ribonucleoside in mRNA + H2O = a 5'-end phospho-adenosine-phospho-ribonucleoside in mRNA + beta-nicotinamide D-ribonucleotide + 2 H(+). It catalyses the reaction NAD(+) + H2O = beta-nicotinamide D-ribonucleotide + AMP + 2 H(+). It carries out the reaction NADH + H2O = reduced beta-nicotinamide D-ribonucleotide + AMP + 2 H(+). MRNA decapping enzyme that specifically removes the nicotinamide adenine dinucleotide (NAD) cap from a subset of mRNAs by hydrolyzing the diphosphate linkage to produce nicotinamide mononucleotide (NMN) and 5' monophosphate mRNA. The NAD-cap is present at the 5'-end of some mRNAs and stabilizes RNA against 5'-processing. Has preference for mRNAs with a 5'-end purine. Catalyzes the hydrolysis of a broad range of dinucleotide pyrophosphates. This chain is NAD-capped RNA hydrolase NudC, found in Pectobacterium atrosepticum (strain SCRI 1043 / ATCC BAA-672) (Erwinia carotovora subsp. atroseptica).